The chain runs to 576 residues: WD repeat-containing protein 26 (576 aa).

The segment covering 1–20 (MQSNGTGQEQNHPANTQNGD) has biased composition (polar residues). The segment at 1 to 46 (MQSNGTGQEQNHPANTQNGDANGLQSNAGSASGASGTGSGSLKKKK) is disordered. Residues 21-34 (ANGLQSNAGSASGA) show a composition bias toward low complexity. The residue at position 49 (S49) is a Phosphoserine. The LisH domain maps to 51–83 (AEEDVIRLIGQHLHGLGLNQTVDLLMQESGCRL). Residues 84–143 (EHSSATKFRNHVMEGEWDKAENDLNELKALMHSPNAIVRMKFLLLQQKYLEYLEDGKVLE) enclose the CTLH domain. 6 WD repeats span residues 265–304 (EHCN…HQLK), 311–350 (GHAY…GELR), 356–396 (SHED…ESWE), 436–475 (QEDH…LVRK), 478–520 (GVTQ…PIVE), and 523–563 (GHTR…DAQE).

In terms of assembly, forms homooligomers. Identified in the CTLH complex that contains at least MAEA, RMND5A (or alternatively its paralog RMND5B), GID8, WDR26, and RANBP9 and/or RANBP10. Interacts with DDB1-CUL4A/B E3 ligase complexes.

Its subcellular location is the cytoplasm. It is found in the nucleus. The protein resides in the mitochondrion. G-beta-like protein involved in cell signal transduction. Acts as a negative regulator in MAPK signaling pathway. Functions as a scaffolding protein to promote G beta:gamma-mediated PLCB2 plasma membrane translocation and subsequent activation in leukocytes. Core component of the CTLH E3 ubiquitin-protein ligase complex that mediates ubiquitination and subsequent proteasomal degradation of target proteins. Acts as a negative regulator of the canonical Wnt signaling pathway through preventing ubiquitination of beta-catenin CTNNB1 by the beta-catenin destruction complex, thus negatively regulating CTNNB1 degradation. Serves as a scaffold to coordinate PI3K/AKT pathway-driven cell growth and migration. Protects cells from oxidative stress-induced apoptosis via the down-regulation of AP-1 transcriptional activity as well as by inhibiting cytochrome c release from mitochondria. Also protects cells by promoting hypoxia-mediated autophagy and mitophagy. This Danio rerio (Zebrafish) protein is WD repeat-containing protein 26 (wdr26).